The following is a 430-amino-acid chain: Probable sugar isomerase mlr5709 (430 aa).

Residues histidine 257, aspartate 289, and aspartate 291 each contribute to the Mn(2+) site.

This sequence belongs to the rhamnose isomerase family. Mn(2+) is required as a cofactor.

The chain is Probable sugar isomerase mlr5709 from Mesorhizobium japonicum (strain LMG 29417 / CECT 9101 / MAFF 303099) (Mesorhizobium loti (strain MAFF 303099)).